Consider the following 368-residue polypeptide: Alanine racemase (368 aa).

Lys-40 functions as the Proton acceptor; specific for D-alanine in the catalytic mechanism. Lys-40 is modified (N6-(pyridoxal phosphate)lysine). Residue Arg-134 coordinates substrate. The Proton acceptor; specific for L-alanine role is filled by Tyr-263. Substrate is bound at residue Met-310.

It belongs to the alanine racemase family. Requires pyridoxal 5'-phosphate as cofactor.

It catalyses the reaction L-alanine = D-alanine. Its pathway is amino-acid biosynthesis; D-alanine biosynthesis; D-alanine from L-alanine: step 1/1. In terms of biological role, catalyzes the interconversion of L-alanine and D-alanine. May also act on other amino acids. This Listeria innocua serovar 6a (strain ATCC BAA-680 / CLIP 11262) protein is Alanine racemase (alr).